The following is a 332-amino-acid chain: Acryloyl-coenzyme A reductase (332 aa).

Cys38 is a Zn(2+) binding site. Tyr39 serves as a coordination point for NADP(+). Zn(2+) is bound by residues His60, Asp90, Cys93, Cys96, Cys104, and Cys146. NADP(+) contacts are provided by residues 172-175 (SGGV) and 194-196 (TTS).

The protein belongs to the zinc-containing alcohol dehydrogenase family. As to quaternary structure, monomer. Zn(2+) is required as a cofactor.

It catalyses the reaction propanoyl-CoA + NADP(+) = acryloyl-CoA + NADPH + H(+). Its function is as follows. Plays a role in autotrophic carbon fixation via the 3-hydroxypropionate/4-hydroxybutyrate cycle. Catalyzes the acryloyl-CoA dependent NADPH oxidation and formation of propionyl-CoA. In Metallosphaera sedula (strain ATCC 51363 / DSM 5348 / JCM 9185 / NBRC 15509 / TH2), this protein is Acryloyl-coenzyme A reductase.